The sequence spans 476 residues: Siroheme synthase (476 aa).

Residues 1 to 203 (MHYFPVFADL…RQTEAAKKEL (203 aa)) form a precorrin-2 dehydrogenase /sirohydrochlorin ferrochelatase region. NAD(+)-binding positions include 22–23 (GV) and 43–44 (QK). Residue Ser-128 is modified to Phosphoserine. Residues 214–476 (GFVSLVGAGP…LDSLRIESVA (263 aa)) are uroporphyrinogen-III C-methyltransferase. Pro-223 lines the S-adenosyl-L-methionine pocket. Catalysis depends on Asp-246, which acts as the Proton acceptor. Lys-268 serves as the catalytic Proton donor. S-adenosyl-L-methionine-binding positions include 299–301 (GGD), Val-304, 329–330 (TA), Met-381, and Gly-410.

The protein in the N-terminal section; belongs to the precorrin-2 dehydrogenase / sirohydrochlorin ferrochelatase family. In the C-terminal section; belongs to the precorrin methyltransferase family.

It catalyses the reaction uroporphyrinogen III + 2 S-adenosyl-L-methionine = precorrin-2 + 2 S-adenosyl-L-homocysteine + H(+). The enzyme catalyses precorrin-2 + NAD(+) = sirohydrochlorin + NADH + 2 H(+). It carries out the reaction siroheme + 2 H(+) = sirohydrochlorin + Fe(2+). The protein operates within cofactor biosynthesis; adenosylcobalamin biosynthesis; precorrin-2 from uroporphyrinogen III: step 1/1. It functions in the pathway cofactor biosynthesis; adenosylcobalamin biosynthesis; sirohydrochlorin from precorrin-2: step 1/1. Its pathway is porphyrin-containing compound metabolism; siroheme biosynthesis; precorrin-2 from uroporphyrinogen III: step 1/1. It participates in porphyrin-containing compound metabolism; siroheme biosynthesis; siroheme from sirohydrochlorin: step 1/1. The protein operates within porphyrin-containing compound metabolism; siroheme biosynthesis; sirohydrochlorin from precorrin-2: step 1/1. Multifunctional enzyme that catalyzes the SAM-dependent methylations of uroporphyrinogen III at position C-2 and C-7 to form precorrin-2 via precorrin-1. Then it catalyzes the NAD-dependent ring dehydrogenation of precorrin-2 to yield sirohydrochlorin. Finally, it catalyzes the ferrochelation of sirohydrochlorin to yield siroheme. In Actinobacillus succinogenes (strain ATCC 55618 / DSM 22257 / CCUG 43843 / 130Z), this protein is Siroheme synthase.